The following is a 2486-amino-acid chain: MSLTTDEAGRKSICLFPAIVTNTKSANKPGMQKVALDPILCRDLNDHDRFQNRGELQLLLSTAWTIVLHRFAEANPVHFAVVVDIKRKKLCESWSVEVRPRSLVSSLLDLESWTISTLSRPSYHTFNTAVFIRDEYLTESEMSDVNIVAHTNKSQITVNLVYRCRHLSAFHAENLMSSFSCAMQSVLREPHQPLGKISLCSLAQQQQISRWQNQPLKEDSKTAMWHRLAEFSARQPLSPAVQSTSGYLTYADLDELSSRMAVCLQDKHRVKPGDMVLLCVQKTPWAIVAMLAINKTGGCFVPCDPTHPVARRQVMATRCQARLAVVSPGYEDLLARIVPEISINPEPAMTEWRESFVPGDDNRTHRPIFSPSAPAYCFFTSGSTGEPKGCIGSHSALAALAHQVPALRMSTESRVLQFAKFGFGISFIEIFCTLAAGGTVCILSDGERLDALPDAMNQMRVNWALLTPTVTQSLVPEQIPGLGMLFLGGEAPDDGLILRWKDKVSLFQVFGTTEMAGVTLVSSRITSPAQRKTVGFGANARVWLCDVSEEEENNAGNLSLAPIGAVGELVIGGPSLGAGYLGDPQRTHALFLELPTSVVAGFSSNLQRVYKTGDLVRYNHDGSLSYIGRRGTQVKLRGQRLELEEVECHIIRLLAGTKTWTGALRVIALVIDPSGQDQTQVDRCTLAAFILMPQASREPRTSSNGTLEFLKLREQDHRDLDMVQEKLRDTLPPFMVPQIFLALVDVPRTATGKVDRNRIQRQINALPYQDLQHLAGRRVQMLRAQTDIELKVHALICDVLQIQPEDVSMLDDFFQLGGNSMTAITLVSAAKKQEALKLAVADVFKHPVLADLARSAKETSKVSTVQIATQRPFMMLDEESLDLNELKQTVVTQCNIGLSSLEDAYPCTPLQEGMMALTEQRRFSYRAKVQCHLQPEIDLSQFRRAWERVVVRNEILRTRLVSVSSQGVWQVVLRGSFAWDDTESQADEAPMGLGAKLVRGVIISTRSKGTFFILTIHHAICDLWAIRLLLDQVWREYTNVHAGTGSAAPNRFSQFVRYVRRMRNDPASEAYWKGQFAGLDSQVFPELPQPNFIPSPDDEIQHQISLPVRISETSTLSNYIRLAWAMVISHYTATDDVVFGEILNGRGAIMSEHGEDAVEHIVGPTLVSVPRRVELDYEMSVSEALSRIQEQRTEMIPFEQVGLQYIQRYSPETEVACMFQSHIVVQSAWNPPGQIFQSVQAGASITGGFASYAIGLECRLSMNESRLGLTACFDSRVVSRPHMQRLLNHLHMVLESMIQDPYQRLKSVPRVSSQDLDRIYTWNVGIPTNICGNVHESIRAQARKTPLAPAIDAWDGKLNFNELEHHSNQAALELQRRGLVPGDFVPLLFERSMWTPVAMIAVNKAGAAFVPMDTEQPLPRLQAMAKQVKCTVIVCSDSMRSMACQVTPAATVIPFSNVRSSGLRHCPLELQQLPTVTAHGAMYAAFTSGSTGTPKGVVIEHGSYCVAAQEYNKQTLIDRHSRVLQFASYSFDAHIGETISTLMAGACVCIPSDQDRQNALAQAASSMQITHAMLTPAVARLIRREEMPSLRTLTLMGEAMRPSDYAYWAEKVRLFNGYGPTECTVAISCREYRPGDAVQDIGWPRAAGVWITDPRDYHQLMPMGAVGELLLEGPPVARGYLNNPEQTAKAFISRPRWRPDIGHAHRIYRTGDLVRYTEDKSLQYVGRIGDQMKIRGQRIERGEVESQLRRFWLPTGVEMAVDAVLAGDNRDRVCLVAFIEHNRKKVDGTDQGLCQSMLTSPDGDFSLQVIRVETQLQQHLPRFMVPVIFVPIYRLPHMLSGKIDRPRLKRELQAYTWEELRQFFPAAAPTRPPSTDQERALQDVWAHVLQVPASRIGVDDNFFHIGGDSVTGMQAVAQARTKHLDHSLADIFRYKTIAEILSHTSSASKTGADLANDIGGPVQLLGGRDALEQLDVSKEEIEDIYPCAPVQQGILLVQARKPAFYHVAFSWEVTNSTVEKTGRAIEQIIARHAIFRTCFLQPGSNSSSFFQVVLRCRKQEIPIRALSDEIHQFPGDFQPSARVSSRFSIYYNHGNTSIFVRLDISHALWDGGPIMVVQRELDLGSQGQLIRYPEPSLYRNYIAYIARQDQEAAAGFWTTHLKDMAACHFPSLLTSDLRGPDTPEDLNFELRDYAAIRPYCRRINVTVPNFFCLVWAMVLRCVTLKDQICFGNLVSGRDLPLDDVLNIAGPMINLLPCRIDLSNGKVAEILQQIYSDYAASLSHQTFPIANLRSPCGRSPMAQFDTQLSIRRADSTNDTRNVHLCNIQSWDPHESRVNCYVILEDTRTQVNIRYWKSTMSTEQAALVRTCFCSAVSQLLDGENARVADLALISAVQRARIWGFLSSSETIVEPLERIWAEVLNRAQTQIGGNDDFFRLGGDSILAVRMVSLARKGGIDIRVADVFKFSTIYKLARLLQTQAQTAEGE.

The adenylation 1 stretch occupies residues 231 to 637 (FSARQPLSPA…GRRGTQVKLR (407 aa)). The region spanning 786-860 (TDIELKVHAL…DLARSAKETS (75 aa)) is the Carrier 1 domain. An O-(pantetheine 4'-phosphoryl)serine modification is found at S820. The tract at residues 902–1314 (EDAYPCTPLQ…LKSVPRVSSQ (413 aa)) is condensation 1. Positions 1339-1735 (RAQARKTPLA…GRIGDQMKIR (397 aa)) are adenylation 2. 2 consecutive Carrier domains span residues 1872–1948 (PPST…SSAS) and 2404–2480 (SSSE…QTQA). O-(pantetheine 4'-phosphoryl)serine is present on residues S1909 and S2441. A condensation 2 region spans residues 2404–2480 (SSSETIVEPL…KLARLLQTQA (77 aa)).

The protein belongs to the NRP synthetase family.

It participates in secondary metabolite biosynthesis. In terms of biological role, nonribosomal peptide synthetase; part of the gene cluster that mediates the biosynthesis of the benzazepine alkaloid nanangelenin A which contains an unprecedented 3,4-dihydro-1-benzazepine-2,5-dione-N-prenyl-N-acetoxy-anthranilamide scaffold. The first step of nanangelenin biosynthesis is catalyzed by the indoleamine 2,3-dioxygenase nanC which produces N-formyl-kynurenine through the catabolism of tryptophan. The two-module NRPS nanA then utilizes anthranilate (Ant) and L-kynurenine (L-Kyn) to assemble the dipeptide product nanangelenin B. The first adenylation domain of nanA (A1) loads anthranilate onto the T1 domain, while A2 loads kynurenine, generated through spontaneous nonenzymatic deformylation of the nanC-supplied N-formyl-kynurenine. The peptide bond formation between the tethered amino acids is catalyzed by the first condensation domain (C1) between anthranilate's carbonyl carbon and kynurenine's aliphatic primary amine. The second C domain (C2) catalyzes the final cyclization event between the aromatic amine of kynurenine and the tethered carbonyl carbon, yielding nanangelenin B. The terminal T3 domain enhances the catalytic efficiency of C2, suggesting the T2-tethered Ant-L-Kyn is transferred to T3 prior to cyclization by C2. Once released from nanA, nanangelenin B is then prenylated by the prenyltransferase nanD to form nanangelenin C. Nanangelenin C is then N-hydroxylated by the FAD-dependent monooxygenase nanF and further acetylated by the acetyltransferase nanB to yield nanangelenin F. Finally, the N-methyltransferase nanE methylates the amide nitrogen of 1-benzazepine to convert nanangelenin F into nanangelenin A. NanE is also able to methylate most of the intermediates of the pathway such as nanangelenin B and nanangelenin C to produce nanangelenin D and nanangelenin E, respectively. The polypeptide is Nonribosomal peptide synthetase nanA (Aspergillus nanangensis).